The following is a 46-amino-acid chain: Mu-segestritoxin-Sf1d (46 aa).

Intrachain disulfides connect Cys-3-Cys-19, Cys-10-Cys-22, Cys-18-Cys-42, and Cys-24-Cys-40. Positions 31–33 (RPW) are keys region for toxin activity.

Belongs to the neurotoxin 16 (SFI) family. In terms of tissue distribution, expressed by the venom gland.

Its subcellular location is the secreted. Insecticidal toxin. It inhibits insect voltage-gated sodium channels (Nav) by partially blocking the channel pore in DUM neurons from the American cockroach, not by acting as a gating modifier. The inhibition is only partially reversible after prolonged washout. In vivo, the toxin causes flaccid paralysis followed by death when injected into Heliothis virescens larvae. It also causes uncoordinated movements followed by full paralysis to sheep blowflies (Lucilia cuprina). When the toxin is fused to snowdrop lectin, it is orally active against larvae of the tomato moth (Laconobia oleracea), the rice brown planthopper (Nilaparvata lugens), and the peach-potato aphid (Myzus persicae). The protein is Mu-segestritoxin-Sf1d of Segestria florentina (Tube-web spider).